Consider the following 20-residue polypeptide: Elastase (20 aa).

A Peptidase S1 domain is found at 1–20 (VVGGEVARAHSWPWQISLQY).

Belongs to the peptidase S1 family. Elastase subfamily.

Functionally, digests most rapidly at the C-terminal side of alanine residues, but also cleaves at valine and leucine residues. This chain is Elastase, found in Gadus morhua (Atlantic cod).